We begin with the raw amino-acid sequence, 362 residues long: E3 ubiquitin-protein ligase TM129 (362 aa).

Topologically, residues 1-6 (MESPEV) are lumenal. The chain crosses the membrane as a helical span at residues 7-27 (TFTLAYVVFSVCFVFTPNEFH). Residues 28 to 56 (SAGITVQNLLSGWLGSEDVAFVHYHIRRS) lie on the Cytoplasmic side of the membrane. A helical membrane pass occupies residues 57–77 (TATLLTHSLLPMGYFIGMCFA). Residues 78 to 94 (APEKELYNVYKAADGWK) lie on the Lumenal side of the membrane. A helical membrane pass occupies residues 95 to 115 (VFVLITVLLPVTTSILAFYWS). Residues 116–362 (QKRWGNHPLA…FCIVDVCIVR (247 aa)) lie on the Cytoplasmic side of the membrane. The segment at 285 to 350 (CIGCMQTNAN…SSHVPCPTCR (66 aa)) adopts an RING-type; degenerate zinc-finger fold.

It belongs to the TMEM129 family. In terms of assembly, integral component of ER-resident dislocation complexes.

It is found in the endoplasmic reticulum membrane. The catalysed reaction is S-ubiquitinyl-[E2 ubiquitin-conjugating enzyme]-L-cysteine + [acceptor protein]-L-lysine = [E2 ubiquitin-conjugating enzyme]-L-cysteine + N(6)-ubiquitinyl-[acceptor protein]-L-lysine.. It participates in protein modification; protein ubiquitination. E3 ubiquitin-protein ligase involved in ER-associated protein degradation, preferentially associates with the E2 enzyme UBE2J2. In Xenopus tropicalis (Western clawed frog), this protein is E3 ubiquitin-protein ligase TM129 (tmem129).